A 258-amino-acid polypeptide reads, in one-letter code: Serine protease sp-Eoc49 (258 aa).

The signal sequence occupies residues 1–18 (MVLIRVLANLLVLQLSYA). In terms of domain architecture, Peptidase S1 spans 25-249 (VVGGGECNRN…YTDWIQSIIA (225 aa)). Asn-44 carries an N-linked (GlcNAc...) asparagine glycan. The cysteines at positions 50 and 66 are disulfide-linked. His-65 (charge relay system) is an active-site residue. 2 N-linked (GlcNAc...) asparagine glycosylation sites follow: Asn-79 and Asn-103. The active-site Charge relay system is the Asp-110. 3 disulfide bridges follow: Cys-142-Cys-210, Cys-174-Cys-189, and Cys-200-Cys-225. The N-linked (GlcNAc...) asparagine glycan is linked to Asn-154. Ser-204 acts as the Charge relay system in catalysis. Asn-251 carries an N-linked (GlcNAc...) asparagine glycan.

The protein belongs to the peptidase S1 family. Snake venom subfamily. Monomer. In terms of tissue distribution, expressed by the venom gland.

It is found in the secreted. Snake venom serine protease that may act in the hemostasis system of the prey. The sequence is that of Serine protease sp-Eoc49 from Echis ocellatus (Ocellated saw-scaled viper).